We begin with the raw amino-acid sequence, 154 residues long: Small ribosomal subunit protein uS11c (154 aa).

This sequence belongs to the universal ribosomal protein uS11 family. As to quaternary structure, part of the 30S ribosomal subunit.

It localises to the plastid. This is Small ribosomal subunit protein uS11c from Helicosporidium sp. subsp. Simulium jonesii (Green alga).